The primary structure comprises 625 residues: tRNA uridine 5-carboxymethylaminomethyl modification enzyme MnmG (625 aa).

Residues 16-21 (GGGHAG), Ile128, and Ser183 contribute to the FAD site. 275–289 (GPRYCPSIEDKVVRF) contacts NAD(+). Residue Gln372 coordinates FAD.

Belongs to the MnmG family. As to quaternary structure, homodimer. Heterotetramer of two MnmE and two MnmG subunits. It depends on FAD as a cofactor.

It is found in the cytoplasm. Its function is as follows. NAD-binding protein involved in the addition of a carboxymethylaminomethyl (cmnm) group at the wobble position (U34) of certain tRNAs, forming tRNA-cmnm(5)s(2)U34. This is tRNA uridine 5-carboxymethylaminomethyl modification enzyme MnmG from Protochlamydia amoebophila (strain UWE25).